The primary structure comprises 1129 residues: MTGSDDSSVDYFREGFDDITDDEFPDATRNAVGSSPRPAKRRRRDGTASDVRRRPSENRESQRYSDGGSPQTGSDSFVVDDDEGNYDELQSPSQDSYFEDAEAPSKYKVFIPKRSNIQENIFVTQLTQPPSPPEMIRGPRWKKPEPSIARASTIPTQTIGEGRAAPNAPAASVDDYDDEDLNAAIAASLESFENEQSRPPPSNTKAPTHQPITRSPTVQNEGATDTSFLLEDIPDDAFDSDISLSPPTRAQQQPATRQFGQSSNRPLGVRQTSLFDMTSRNQTDQPPIGEQVWSPPQKDEPPTQHKLDHDALSTWVYPTNLGKTRDYQFNIAQKGLFHNLLVALPTGLGKTFIAATIMLNWFRWTESAQIIFVAPTKPLVAQQISACFGIAGIPRSQTTMLTGEAAPGIRAEEWQNKRVFFMTPQTLINDLKSGIADPKRIVLLVVDEAHRATGGYAYVEVVKFLRRYNQSFRVLALTATPGSTVESVQAVIDGLDIARVEIRTEQSLDIREYVHSRNTEVQTFKNSEEMVLCMDLLSKTLQPLVDQLRTLNAYWGRDPMMLTAFGLTKSRQQWMASDAGRNAHFGLKGKVNAIFTVLASLAHAIDLLKYHGITPFYRHLLHFQSNTEGQKGGKYQRQVVQDESFKKLINHLQPWTKNPEFIGHPKLEYLKSVVLNHFMDAGEGSNGEASDSQSSTRIMIFVHFRDSAEEVTRVLKRYEPMIRPHVFVGQSSAKGSEGMGQKTQLDIVQKFKKGTYNTIVATSIGEEGLDIGEVDLIVCYDSSASPIRMLQRMGRTGRKRAGNIVLLLMEGKEEESYIKAKDNYEKMQQMIASGSRFTFHDDISPRILPAGIRPVADKRHIDIPDENAEQSLPEPKRRGRAPKRPPKKFHMPDNVETGFTKASSLTAGPKSKAEKSRKPRTPTPEPVEIPALEEVVLTSAQQRELEQHYRNIGAASPQFIRNPRNDAFPRLQLVARPTKVVKHGSLTRRMIGTLQKMNNVGPDCGDRFKKILALESARQGDSVIPNRSPRHERRRRLSKTKPRYNHLSTSVDKETLSTEDSQLVTPEHLLSSVVKGQKQQPFYSSQRSKDDDSDDNFDPPDLATLLTRSAERNNAHKTSRFVVSDDSDD.

3 disordered regions span residues 1–101 (MTGS…FEDA), 124–222 (TQLT…QNEG), and 236–306 (DAFD…TQHK). Over residues 45–63 (DGTASDVRRRPSENRESQR) the composition is skewed to basic and acidic residues. Polar residues-rich tracts occupy residues 203 to 222 (NTKAPTHQPITRSPTVQNEG) and 242 to 285 (ISLS…QTDQ). Residues 297 to 306 (QKDEPPTQHK) are compositionally biased toward basic and acidic residues. In terms of domain architecture, Helicase ATP-binding spans 331-499 (IAQKGLFHNL…AVIDGLDIAR (169 aa)). 344–351 (LPTGLGKT) serves as a coordination point for ATP. A DEAH box motif is present at residues 447-450 (DEAH). The 170-residue stretch at 674–843 (VLNHFMDAGE…GSRFTFHDDI (170 aa)) folds into the Helicase C-terminal domain. Disordered stretches follow at residues 863–930 (IPDE…VEIP), 1018–1060 (RQGD…STED), and 1072–1129 (SVVK…DSDD). 2 stretches are compositionally biased toward basic residues: residues 877–889 (RRGRAPKRPPKKF) and 1028–1044 (SPRHERRRRLSKTKPRY). The span at 1077–1086 (QKQQPFYSSQ) shows a compositional bias: polar residues.

It belongs to the DEAD box helicase family. DEAH subfamily. FANCM sub-subfamily. Interacts with the MHF histone-fold complex to form the FANCM-MHF complex.

It localises to the nucleus. It catalyses the reaction ATP + H2O = ADP + phosphate + H(+). Its function is as follows. ATP-dependent DNA helicase involved in DNA damage repair by homologous recombination and in genome maintenance. Capable of unwinding D-loops. Plays a role in limiting crossover recombinants during mitotic DNA double-strand break (DSB) repair. Component of a FANCM-MHF complex which promotes gene conversion at blocked replication forks, probably by reversal of the stalled fork. In Aspergillus oryzae (strain ATCC 42149 / RIB 40) (Yellow koji mold), this protein is ATP-dependent DNA helicase mph1.